The following is a 427-amino-acid chain: Peptidase B (427 aa).

Mn(2+)-binding residues include K195 and D200. Residue K207 is part of the active site. Mn(2+) is bound by residues D218, D277, and E279. The active site involves R281.

Belongs to the peptidase M17 family. Homohexamer. The cofactor is Mn(2+).

The protein localises to the cytoplasm. The catalysed reaction is Release of an N-terminal amino acid, Xaa, from a peptide or arylamide. Xaa is preferably Glu or Asp but may be other amino acids, including Leu, Met, His, Cys and Gln.. Probably plays an important role in intracellular peptide degradation. The protein is Peptidase B of Shigella dysenteriae serotype 1 (strain Sd197).